Here is a 302-residue protein sequence, read N- to C-terminus: Nucleotide-binding protein RHOS4_02640 (302 aa).

15–22 (GPSGAGRT) is an ATP binding site. Residue 62–65 (DVRN) participates in GTP binding.

The protein belongs to the RapZ-like family.

Its function is as follows. Displays ATPase and GTPase activities. The sequence is that of Nucleotide-binding protein RHOS4_02640 from Cereibacter sphaeroides (strain ATCC 17023 / DSM 158 / JCM 6121 / CCUG 31486 / LMG 2827 / NBRC 12203 / NCIMB 8253 / ATH 2.4.1.) (Rhodobacter sphaeroides).